A 387-amino-acid polypeptide reads, in one-letter code: Mitogen-activated protein kinase homolog MMK1 (387 aa).

A Protein kinase domain is found at 55 to 340 (KPPIMPIGKG…VEDALAHPYL (286 aa)). ATP-binding positions include 61–69 (IGKGAYGIV) and lysine 84. The active-site Proton acceptor is aspartate 181. Residue threonine 213 is modified to Phosphothreonine. Positions 213–215 (TEY) match the TXY motif. Tyrosine 215 carries the phosphotyrosine modification.

This sequence belongs to the protein kinase superfamily. CMGC Ser/Thr protein kinase family. MAP kinase subfamily. Mg(2+) is required as a cofactor. Dually phosphorylated on Thr-213 and Tyr-215, which activates the enzyme. Autophosphorylated. In terms of tissue distribution, roots and stems.

It catalyses the reaction L-seryl-[protein] + ATP = O-phospho-L-seryl-[protein] + ADP + H(+). The enzyme catalyses L-threonyl-[protein] + ATP = O-phospho-L-threonyl-[protein] + ADP + H(+). Activated by tyrosine and threonine phosphorylation. May play a role in the mitogenic induction of symbiotic root nodules on Alfalfa by Rhizobium signal molecules. This is Mitogen-activated protein kinase homolog MMK1 (MMK1) from Medicago sativa (Alfalfa).